The primary structure comprises 429 residues: Enolase 1 (429 aa).

Q163 serves as a coordination point for (2R)-2-phosphoglycerate. The active-site Proton donor is the E205. Positions 242, 287, and 314 each coordinate Mg(2+). Residues K339, R368, S369, and K390 each coordinate (2R)-2-phosphoglycerate. Catalysis depends on K339, which acts as the Proton acceptor.

The protein belongs to the enolase family. The cofactor is Mg(2+).

The protein resides in the cytoplasm. It is found in the secreted. It localises to the cell surface. It carries out the reaction (2R)-2-phosphoglycerate = phosphoenolpyruvate + H2O. It functions in the pathway carbohydrate degradation; glycolysis; pyruvate from D-glyceraldehyde 3-phosphate: step 4/5. Functionally, catalyzes the reversible conversion of 2-phosphoglycerate (2-PG) into phosphoenolpyruvate (PEP). It is essential for the degradation of carbohydrates via glycolysis. This is Enolase 1 from Cupriavidus metallidurans (strain ATCC 43123 / DSM 2839 / NBRC 102507 / CH34) (Ralstonia metallidurans).